Here is a 391-residue protein sequence, read N- to C-terminus: UPF0229 protein CLH_2838 (391 aa).

2 disordered regions span residues 1-23 (MAIFRDRTDKQVDHDRAIEDKRR) and 75-107 (VATGTGEEKRGDKIESGSKKAMGKGNKGAGNEE). Positions 80–92 (GEEKRGDKIESGS) are enriched in basic and acidic residues.

The protein belongs to the UPF0229 family.

The sequence is that of UPF0229 protein CLH_2838 from Clostridium botulinum (strain Alaska E43 / Type E3).